The primary structure comprises 393 residues: Cytochrome b (393 aa).

4 consecutive transmembrane segments (helical) span residues 32-52, 76-98, 113-133, and 179-199; these read FGSL…FLAM, WLIR…LHIG, LWSI…LGYV, and FFSL…MHLL. Heme b contacts are provided by H82 and H96. H183 and H197 together coordinate heme b. An a ubiquinone-binding site is contributed by H202. 4 helical membrane passes run 225 to 245, 289 to 309, 321 to 341, and 348 to 368; these read FTFK…LFVF, LIGV…PILD, LMRF…FIGS, and YVEI…VVVP.

This sequence belongs to the cytochrome b family. As to quaternary structure, fungal cytochrome b-c1 complex contains 10 subunits; 3 respiratory subunits, 2 core proteins and 5 low-molecular weight proteins. Cytochrome b-c1 complex is a homodimer. Heme b serves as cofactor.

It localises to the mitochondrion inner membrane. Functionally, component of the ubiquinol-cytochrome c reductase complex (complex III or cytochrome b-c1 complex) that is part of the mitochondrial respiratory chain. The b-c1 complex mediates electron transfer from ubiquinol to cytochrome c. Contributes to the generation of a proton gradient across the mitochondrial membrane that is then used for ATP synthesis. The protein is Cytochrome b (COB) of Mycosarcoma maydis (Corn smut fungus).